The primary structure comprises 660 residues: uncharacterized protein (660 aa).

Residues 1–660 (MGTPCQSARG…RNPGCPRTWR (660 aa)) are disordered. A compositionally biased stretch (gly residues) spans 67–80 (RPGGGNRVGAGRGR). The span at 104-116 (SNPTGGCSDPQRS) shows a compositional bias: polar residues. 4 consecutive repeat copies span residues 149–273 (SARN…GCPR), 274–398 (SARN…GCPR), 399–523 (SARN…GCPR), and 524–648 (SARN…GCPR). The interval 149-648 (SARNPGCPRT…THRRPPGCPR (500 aa)) is 4 X 125 AA tandem repeats. Composition is skewed to low complexity over residues 177–196 (RPSG…GTPA), 302–321 (RPSG…GTPA), 427–446 (RPSG…GTPA), and 552–571 (RPSG…GTPA).

This is an uncharacterized protein from Homo sapiens (Human).